Reading from the N-terminus, the 206-residue chain is MEIYENENDQVEAVKRFFAENGKALAVGVILGVGALIGWRYWNSHQVDSARSASLAYQNAVTAVSEGKPDSIPAAEKFAAENKNTYGALASLELAQQFVDKNELEKAAAQLQQGLADTSDENLKAVINLRLARVQVQLKQADAALKTLDTIKGEGWAAIVADLRGEALLSKGDKQGARSAWEAGVKSDVTPALSEMMQMKINNLSI.

Residues 1–23 lie on the Cytoplasmic side of the membrane; sequence MEIYENENDQVEAVKRFFAENGK. The helical transmembrane segment at 24–43 threads the bilayer; the sequence is ALAVGVILGVGALIGWRYWN. Residues 44 to 206 lie on the Periplasmic side of the membrane; it reads SHQVDSARSA…MQMKINNLSI (163 aa).

Belongs to the YfgM family. In terms of assembly, interacts with the SecYEG translocon. Forms a complex with PpiD. Also interacts with RcsB.

The protein resides in the cell inner membrane. Is stable during exponential growth and degraded in stationary phase by the essential FtsH protease. Degradation is influenced by the alarmone (p)ppGpp, but not by inorganic polyphosphate (polyP), RpoS, RcsB or PpiD. In terms of biological role, may mediate protein transfer from the SecYEG translocon to the periplasmic chaperone network via its periplasmic C-terminal region. In addition, at the cytosolic site, acts as a negative regulator of RcsB. In stationary phase, the FtsH-dependent degradation of YfgM ensures the release of RcsB from YfgM and thereby permits cellular protection by the Rcs phosphorelay system. May coordinate stress responses across the inner membrane via a dynamic protein-protein interaction network inside and outside of the membrane. The protein is Ancillary SecYEG translocon subunit (yfgM) of Escherichia coli (strain K12).